The primary structure comprises 605 residues: Formin-binding protein 1-like (605 aa).

Positions 1-263 (MSWGTELWDQ…AAKSVDERRD (263 aa)) constitute an F-BAR domain. A coiled-coil region spans residues 66-258 (FTSCIAFFNI…EGMILAAKSV (193 aa)). Residues 245-535 (SKCLEGMILA…EFDDEFEDDD (291 aa)) are interaction with CDC42. Residue S295 is modified to Phosphoserine. Positions 325–345 (FGKKPKPQSPPLTPTSLFTSS) are disordered. Positions 392-484 (LEDFSHLPPE…VEGKTGVRGD (93 aa)) form a coiled coil. An REM-1 domain is found at 397–474 (HLPPEQRRKK…IHKNEAWLSE (78 aa)). Over residues 480-490 (GVRGDRRHSSD) the composition is skewed to basic and acidic residues. The interval 480–539 (GVRGDRRHSSDINHLVTQGRESPEGSYTDDANQEVRGPPQQHGHHSEFDDEFEDDDPLPA) is disordered. Phosphoserine is present on residues S488, S501, and S505. An interaction with DNM1 region spans residues 522–605 (GHHSEFDDEF…VTLEKNSKGS (84 aa)). Acidic residues predominate over residues 527-536 (FDDEFEDDDP). The SH3 domain maps to 538-599 (PAIGHCKAIY…PTTYIDVTLE (62 aa)). Positions 541-597 (GHCKAIYPFDGHNEGTLAMKEGEVLYIIEEDKGDGWTRARRQNGEEGYVPTTYIDVT) are interaction with DNM2 and WASL. Residues 541–605 (GHCKAIYPFD…VTLEKNSKGS (65 aa)) form an interaction with DAAM1, DIAPH1 and DIAPH2 region.

Belongs to the FNBP1 family. Homodimerizes, the dimers can polymerize end-to-end to form filamentous structures. Interacts with GTP-bound CDC42. Interacts with DAAM1, DIAPH1, DIAPH2, DNM1, DNM2 and WASL/N-WASP. Interacts with ATG3. Interacts (via SH3 domain) with ABI1, WASF2, CDC42 and WIPF1. As to expression, isoform 1 is expressed in brain. Isoform 2 is expressed in brain, kidney and lung. Within the brain expression is seen in cortical neurons, hippocampal pyramidal neurons, hypothalamus and piriform cortex.

It is found in the cytoplasm. Its subcellular location is the cytoskeleton. The protein resides in the cell cortex. It localises to the cytoplasmic vesicle. The protein localises to the cell membrane. Its function is as follows. Required to coordinate membrane tubulation with reorganization of the actin cytoskeleton during endocytosis. May bind to lipids such as phosphatidylinositol 4,5-bisphosphate and phosphatidylserine and promote membrane invagination and the formation of tubules. Also promotes CDC42-induced actin polymerization by activating the WASL-WASPIP complex, the predominant form of WASL/N-WASP in cells. Actin polymerization may promote the fission of membrane tubules to form endocytic vesicles. Essential for autophagy of intracellular bacterial pathogens. May negatively regulate neurite extension and axon branching in developing neurons. The polypeptide is Formin-binding protein 1-like (Fnbp1l) (Rattus norvegicus (Rat)).